The primary structure comprises 367 residues: Aspartate beta-hydroxylase domain-containing protein 1 (367 aa).

The disordered stretch occupies residues 1-27 (MWRGSSAGGSQGAAMEGTGGELGGQGN). Topologically, residues 1 to 49 (MWRGSSAGGSQGAAMEGTGGELGGQGNWGLEDAPGLLARASLPIMPAWP) are cytoplasmic. A helical membrane pass occupies residues 50 to 72 (LPLASSALTLLLGALTSLFLWYC). At 73–367 (YRLGSQDMQA…ALDFVFAPDP (295 aa)) the chain is on the lumenal side. The interval 88–122 (RAGAVGGRPGGCSEAGRPSPGRSGESGEGPRTEGL) is disordered. S106 carries the post-translational modification Phosphoserine.

The protein belongs to the aspartyl/asparaginyl beta-hydroxylase family.

It is found in the membrane. The sequence is that of Aspartate beta-hydroxylase domain-containing protein 1 (ASPHD1) from Bos taurus (Bovine).